An 83-amino-acid polypeptide reads, in one-letter code: Small ribosomal subunit protein bS16 (83 aa).

This sequence belongs to the bacterial ribosomal protein bS16 family.

This Borrelia duttonii (strain Ly) protein is Small ribosomal subunit protein bS16.